The sequence spans 333 residues: Holliday junction branch migration complex subunit RuvB (333 aa).

The tract at residues 1-182 is large ATPase domain (RuvB-L); that stretch reads MDERLLSGES…FGVLSRLEYY (182 aa). ATP contacts are provided by residues Leu21, Arg22, Gly63, Lys66, Thr67, Thr68, 129-131, Arg172, Tyr182, and Arg219; that span reads EDF. Thr67 contacts Mg(2+). Residues 183-253 are small ATPAse domain (RuvB-S); the sequence is TVDQLSAIVE…ITQMALELLQ (71 aa). The tract at residues 256–333 is head domain (RuvB-H); the sequence is KLGLDHIDHK…EHFGMEMPKV (78 aa). 2 residues coordinate DNA: Arg311 and Arg316.

The protein belongs to the RuvB family. In terms of assembly, homohexamer. Forms an RuvA(8)-RuvB(12)-Holliday junction (HJ) complex. HJ DNA is sandwiched between 2 RuvA tetramers; dsDNA enters through RuvA and exits via RuvB. An RuvB hexamer assembles on each DNA strand where it exits the tetramer. Each RuvB hexamer is contacted by two RuvA subunits (via domain III) on 2 adjacent RuvB subunits; this complex drives branch migration. In the full resolvosome a probable DNA-RuvA(4)-RuvB(12)-RuvC(2) complex forms which resolves the HJ.

It localises to the cytoplasm. The enzyme catalyses ATP + H2O = ADP + phosphate + H(+). In terms of biological role, the RuvA-RuvB-RuvC complex processes Holliday junction (HJ) DNA during genetic recombination and DNA repair, while the RuvA-RuvB complex plays an important role in the rescue of blocked DNA replication forks via replication fork reversal (RFR). RuvA specifically binds to HJ cruciform DNA, conferring on it an open structure. The RuvB hexamer acts as an ATP-dependent pump, pulling dsDNA into and through the RuvAB complex. RuvB forms 2 homohexamers on either side of HJ DNA bound by 1 or 2 RuvA tetramers; 4 subunits per hexamer contact DNA at a time. Coordinated motions by a converter formed by DNA-disengaged RuvB subunits stimulates ATP hydrolysis and nucleotide exchange. Immobilization of the converter enables RuvB to convert the ATP-contained energy into a lever motion, pulling 2 nucleotides of DNA out of the RuvA tetramer per ATP hydrolyzed, thus driving DNA branch migration. The RuvB motors rotate together with the DNA substrate, which together with the progressing nucleotide cycle form the mechanistic basis for DNA recombination by continuous HJ branch migration. Branch migration allows RuvC to scan DNA until it finds its consensus sequence, where it cleaves and resolves cruciform DNA. This Bacillus cereus (strain Q1) protein is Holliday junction branch migration complex subunit RuvB.